The primary structure comprises 122 residues: Large ribosomal subunit protein uL14 (122 aa).

Belongs to the universal ribosomal protein uL14 family. As to quaternary structure, part of the 50S ribosomal subunit. Forms a cluster with proteins L3 and L19. In the 70S ribosome, L14 and L19 interact and together make contacts with the 16S rRNA in bridges B5 and B8.

In terms of biological role, binds to 23S rRNA. Forms part of two intersubunit bridges in the 70S ribosome. The chain is Large ribosomal subunit protein uL14 from Frankia alni (strain DSM 45986 / CECT 9034 / ACN14a).